The primary structure comprises 143 residues: Type II secretion system core protein G (143 aa).

Residues 1-17 (MIKRSITRSPSRAGQAG) constitute a propeptide, leader sequence. M18 carries the N-methylmethionine modification. Residues 18 to 38 (MSLLEIIIVIVLIGAVLTLVG) form a helical membrane-spanning segment.

It belongs to the GSP G family. In terms of assembly, type II secretion system is composed of four main components: the outer membrane complex, the inner membrane complex, the cytoplasmic secretion ATPase and the periplasm-spanning pseudopilus. Forms homomultimers. Interacts with pseudopilin tip complex component XpsJ as well as XpsI and XcpH. Interacts with XpsN and secretin XpsD. In terms of processing, cleaved by the prepilin peptidase. Post-translationally, methylated by prepilin peptidase at the amino group of the N-terminal methionine once the leader sequence is cleaved.

The protein localises to the cell inner membrane. Core component of the type II secretion system required for the energy-dependent secretion of extracellular factors such as proteases and toxins from the periplasm. Pseudopilin (pilin-like) protein that polymerizes to form the pseudopilus. Further polymerization triggers pseudopilus growth. The chain is Type II secretion system core protein G (xpsG) from Xanthomonas campestris pv. campestris (strain ATCC 33913 / DSM 3586 / NCPPB 528 / LMG 568 / P 25).